A 339-amino-acid chain; its full sequence is TATA-box-binding protein (339 aa).

Disordered regions lie at residues 1–21 (MDQN…QGAM), 36–71 (TGLT…QQQQ), and 127–159 (LTTA…SESS). A compositionally biased stretch (polar residues) spans 38–50 (LTPQPIQNTNSLS). 3 stretches are compositionally biased toward low complexity: residues 57 to 71 (RQQQ…QQQQ), 127 to 138 (LTTAPLPGTTPL), and 146 to 156 (MTPITPATPAS). Tandem repeats lie at residues 165–241 (LQNI…ARVV) and 255–332 (IQNM…YPIL). DNA contacts are provided by Asn-167, Arg-203, Lys-218, Asn-257, and Arg-294.

This sequence belongs to the TBP family. Binds DNA as monomer. Component of the TFIID basal transcription factor complex, composed of TATA-box-binding protein TBP, and a number of TBP-associated factors (TAFs), including TAF1, TAF2, TAF3, TAF4, TAF5, TAF6, TAF7, TAF8, TAF9, TAF10, TAF11, TAF12 and TAF13. Part of a TFIID-containing RNA polymerase II pre-initiation complex that is composed of TBP and at least GTF2A1, GTF2A2, GTF2E1, GTF2E2, GTF2F1, GTF2H2, GTF2H3, GTF2H4, GTF2H5, GTF2B, TCEA1, ERCC2, ERCC3, TAF1, TAF2, TAF3, TAF4, TAF5, TAF6, TAF7, TAF8, TAF9, TAF10, TAF11, TAF12 and TAF13. Component of the transcription factor SL1/TIF-IB complex, composed of TBP and at least TAF1A, TAF1B, TAF1C and TAF1D. Association of TBP to form either TFIID or SL1/TIF-IB appears to be mutually exclusive. Interacts with TAF1A, TAF1B and TAF1C. Interacts with TFIIB, NCOA6, DRAP1, DR1 and ELF3. Interacts with SPIB, SNAPC1, SNAPC2 and SNAPC4. Interacts with UTF1. Interacts with BRF2; this interaction promotes recruitment of BRF2 to TATA box-containing promoters. Interacts with UBTFD. Interacts with GPBP1D. Interacts with CITED2. Interacts with ATF7IP. Interacts with LLPH. Interacts with HSF1 (via transactivation domain). Interacts with GTF2B (via C-terminus); this interaction with promoter-bound TBP guides RNA polymerase II into the pre-initiation complex (PIC). Interacts with PAX5. Interacts with MSX1; the interaction may inhibit MSX1 autoinactivation. In terms of assembly, (Microbial infection) Interacts with HIV-1 Tat. As to quaternary structure, (Microbial infection) Interacts with herpes simplex virus 1 ICP4. (Microbial infection) Interacts with herpes simplex virus 2 ICP4. In terms of assembly, (Microbial infection) Interacts with human adenovirus E1A protein; this interaction probably disrupts the TBP-TATA complex. Widely expressed, with levels highest in the testis and ovary.

It localises to the nucleus. Functionally, the TFIID basal transcription factor complex plays a major role in the initiation of RNA polymerase II (Pol II)-dependent transcription. TFIID recognizes and binds promoters with or without a TATA box via its subunit TBP, a TATA-box-binding protein, and promotes assembly of the pre-initiation complex (PIC). The TFIID complex consists of TBP and TBP-associated factors (TAFs), including TAF1, TAF2, TAF3, TAF4, TAF5, TAF6, TAF7, TAF8, TAF9, TAF10, TAF11, TAF12 and TAF13. The TFIID complex structure can be divided into 3 modules TFIID-A, TFIID-B, and TFIID-C. TBP forms the TFIID-A module together with TAF3 and TAF5. TBP is a general transcription factor that functions at the core of the TFIID complex. During assembly of the core PIC on the promoter, as part of TFIID, TBP binds to and also bends promoter DNA, irrespective of whether the promoter contains a TATA box. Component of a BRF2-containing transcription factor complex that regulates transcription mediated by RNA polymerase III. Component of the transcription factor SL1/TIF-IB complex, which is involved in the assembly of the PIC during RNA polymerase I-dependent transcription. The rate of PIC formation probably is primarily dependent on the rate of association of SL1 with the rDNA promoter. SL1 is involved in stabilization of nucleolar transcription factor 1/UBTF on rDNA. This Homo sapiens (Human) protein is TATA-box-binding protein (TBP).